A 109-amino-acid polypeptide reads, in one-letter code: uncharacterized protein (109 aa).

Its subcellular location is the mitochondrion. This is an uncharacterized protein from Marchantia polymorpha (Common liverwort).